The chain runs to 748 residues: ATP-dependent RNA helicase DRS1 (748 aa).

Disordered stretches follow at residues 1 to 72 (MAVK…PEFQ) and 111 to 211 (RKGG…EDTK). Residues 18-32 (DSEEDVPDLDASDDE) show a composition bias toward acidic residues. Basic residues predominate over residues 38-52 (VKSSKTKNKSKKKAK). Over residues 58-67 (HLDEDVHEDL) the composition is skewed to basic and acidic residues. 3 stretches are compositionally biased toward acidic residues: residues 124–153 (DAEE…DELA), 168–185 (ENEE…DEDD), and 202–211 (EDEDIEEDTK). Positions 233–261 (KTFNSLSLSRPVLKGLGSLGYTSPSPIQS) match the Q motif motif. Residues 264-439 (IPIALLGKDI…SLSLKKPVRI (176 aa)) enclose the Helicase ATP-binding domain. 277–284 (AVTGSGKT) serves as a coordination point for ATP. The DEAD box signature appears at 387–390 (DEAD). Residues 468–628 (LLYQLIRKLD…TQVEQVNSLI (161 aa)) enclose the Helicase C-terminal domain. The stretch at 632-667 (GDVVEEIIEEEKQEKEILRAEMELRKGENMLKHKEE) forms a coiled coil. The interval 687-748 (KMLQVLAKNK…YGKKGKKGKK (62 aa)) is disordered. The span at 694-705 (KNKKPINSKKRK) shows a compositional bias: basic residues. A compositionally biased stretch (basic and acidic residues) spans 720–732 (TQKDRVEYQERQY).

Belongs to the DEAD box helicase family. DDX27/DRS1 subfamily. As to quaternary structure, associates with pre-ribosomal particles.

It is found in the nucleus. The protein localises to the nucleolus. It carries out the reaction ATP + H2O = ADP + phosphate + H(+). ATP-binding RNA helicase involved in ribosome assembly. The polypeptide is ATP-dependent RNA helicase DRS1 (DRS1) (Kluyveromyces lactis (strain ATCC 8585 / CBS 2359 / DSM 70799 / NBRC 1267 / NRRL Y-1140 / WM37) (Yeast)).